The following is a 98-amino-acid chain: NADH-ubiquinone oxidoreductase chain 4L (98 aa).

Transmembrane regions (helical) follow at residues 1–21 (MSLTYMNMLLAFMISLMGLLM), 29–49 (SLLCLEGMMLSLFVMMTVTIL), and 61–81 (IILLVFAACEAALGLSLLVMV).

This sequence belongs to the complex I subunit 4L family. As to quaternary structure, core subunit of respiratory chain NADH dehydrogenase (Complex I) which is composed of 45 different subunits.

Its subcellular location is the mitochondrion inner membrane. The enzyme catalyses a ubiquinone + NADH + 5 H(+)(in) = a ubiquinol + NAD(+) + 4 H(+)(out). In terms of biological role, core subunit of the mitochondrial membrane respiratory chain NADH dehydrogenase (Complex I) which catalyzes electron transfer from NADH through the respiratory chain, using ubiquinone as an electron acceptor. Part of the enzyme membrane arm which is embedded in the lipid bilayer and involved in proton translocation. The chain is NADH-ubiquinone oxidoreductase chain 4L (MT-ND4L) from Sturnira lilium (Lesser yellow-shouldered bat).